Reading from the N-terminus, the 338-residue chain is Probable family 20 transposase (338 aa).

It belongs to the transposase 20 family.

Required for the transposition of an insertion element. The protein is Probable family 20 transposase of Pseudomonas aeruginosa (strain ATCC 15692 / DSM 22644 / CIP 104116 / JCM 14847 / LMG 12228 / 1C / PRS 101 / PAO1).